Reading from the N-terminus, the 564-residue chain is Septation ring formation regulator EzrA (564 aa).

Topologically, residues 1–4 are extracellular; it reads MVLF. A helical membrane pass occupies residues 5–23; sequence IILAILVVILIAIGVLFYM. Residues 24–564 are Cytoplasmic-facing; sequence RSNKRNLIEK…KHIEEQVIKE (541 aa). Coiled coils occupy residues 84-126, 165-223, 271-303, and 350-435; these read VEEK…HQVT, EAAE…LIRE, MISR…YEVK, and VRQF…RRLL.

This sequence belongs to the EzrA family.

The protein resides in the cell membrane. In terms of biological role, negative regulator of FtsZ ring formation; modulates the frequency and position of FtsZ ring formation. Inhibits FtsZ ring formation at polar sites. Interacts either with FtsZ or with one of its binding partners to promote depolymerization. The sequence is that of Septation ring formation regulator EzrA from Staphylococcus epidermidis (strain ATCC 12228 / FDA PCI 1200).